The following is a 340-amino-acid chain: uncharacterized protein (340 aa).

One can recognise a Radical SAM core domain in the interval 58–307 (AALPFRYTVN…PSYREMLRER (250 aa)). Residues Cys72, Cys76, and Cys79 each coordinate [4Fe-4S] cluster. The next 2 helical transmembrane spans lie at 140-160 (YALM…LSIL) and 243-263 (QLLG…GLHL).

[4Fe-4S] cluster is required as a cofactor.

It is found in the cell membrane. This is an uncharacterized protein from Mycobacterium tuberculosis (strain CDC 1551 / Oshkosh).